Consider the following 269-residue polypeptide: MADYDLTKTHIKKLAEPKHEIALSTEDLNVYYGDKRAMHDASLQFERYRITALIGASGSGKSTYLRSLNRMNDNIANTRVTGKIMYRDVDINSDEVDVYKMREHIGMVFQRPNPFAKSIYDNITFALKQHGQKDKKYLDEIVETTLKQAALWDQVKDSLNKSALALSGGQQQRLCIARAIAMKPDILLMDEPASALDPISTNTVEETLIRLKEQYTIVIVTHNMQQAARISDYTAFFHSGHALEFDETRKMFTRPKIKAAEDYVSGHFG.

An ABC transporter domain is found at 23–264; the sequence is LSTEDLNVYY…PKIKAAEDYV (242 aa). 55–62 is an ATP binding site; sequence GASGSGKS.

This sequence belongs to the ABC transporter superfamily. Phosphate importer (TC 3.A.1.7) family. In terms of assembly, the complex is composed of two ATP-binding proteins (PstB), two transmembrane proteins (PstC and PstA) and a solute-binding protein (PstS).

It is found in the cell membrane. It carries out the reaction phosphate(out) + ATP + H2O = ADP + 2 phosphate(in) + H(+). Functionally, part of the ABC transporter complex PstSACB involved in phosphate import. Responsible for energy coupling to the transport system. The polypeptide is Phosphate import ATP-binding protein PstB 1 (Latilactobacillus sakei subsp. sakei (strain 23K) (Lactobacillus sakei subsp. sakei)).